Here is an 863-residue protein sequence, read N- to C-terminus: Paramyosin (863 aa).

Positions 1–18 (MSESHVKISRTIIRGTSP) are nonhelical region. Residues 19 to 836 (STVRLESRVR…ERTITIKRTI (818 aa)) are a coiled coil. Residues 837–863 (GGPGSRAVSVVREINSVSRGNRATSIM) form a nonhelical region region.

It belongs to the paramyosin family. Homodimer or monomer in secreted form.

The protein localises to the cytoplasm. It localises to the myofibril. It is found in the secreted. Paramyosin is a major structural component of many thick filaments isolated from invertebrate muscles. It is a prominent antigen in human cysticercosis, may have a role as a modulator of the host immune response. It is able to bind collagen and has complement inhibitor activity. In Taenia solium (Pork tapeworm), this protein is Paramyosin (PMY).